The following is a 327-amino-acid chain: Urease accessory protein 4 (327 aa).

Asn120 carries an N-linked (GlcNAc...) asparagine glycan. Residues Val239–Tyr259 traverse the membrane as a helical segment.

This sequence belongs to the UreD family. In terms of assembly, URE4, URE6 and URE7 may form a complex that acts as a GTP-hydrolysis-dependent molecular chaperone, activating the urease apoprotein URE1.

The protein resides in the membrane. Urease accessory protein required for the maturation and activation of urease via the functional incorporation of the urease nickel metallocenter. Plays a role in host brain invasion. This chain is Urease accessory protein 4, found in Cryptococcus neoformans var. grubii serotype A (strain H99 / ATCC 208821 / CBS 10515 / FGSC 9487) (Filobasidiella neoformans var. grubii).